Here is a 959-residue protein sequence, read N- to C-terminus: MSDKTNDDKTLSVNPKKTLTLKRPGVEQSTVRQNFSHGRTKAVVVETKKRKFSRPDEKPEVEAAAAPKPAAPAAAPQQAPASAPVSASAAQASAPQPAPVKAPATKAPAAPSAPVTKPHVAQQRPVHQRPGGQQAQRPRPADRSGMVLNTLSRSEMDARRRALEEAQIREVEERARAVEEAKRRAEEDARRAKEREESARRQAEEEARLKAEAEARRKAEEEAAKRMPQPEARSERRDDARPAPYGARPQQAGRPQGGRPQPAGRPQQGSPRPAPIIADAAPIAGKPLPQSQLRKPGQSDDDDDRRSGAARRGVAAKPEVRAPKVVKGEDDRRRGKLTLTSNLEEEGRSRSLSAMRRRQEKFKRSQMQETREKISREVTIPETITLQELAQRMAERSVDIIKYLMKQGQMMKPGDVIDADTAQLIAEEFGHTVKRVAESDVEEGIFDVADNESATVSRPPVVTIMGHVDHGKTSLLDAIRHANVVSGEAGGITQHIGAYQVVQNGQKITFIDTPGHAAFTAMRARGAQATDIAILVVAADDSVMPQTIESINHAKAAGVPIIVAINKIDKPAADPQKVRTALLQHEVFVESMGGEVLDVEVSAKNKINLDKLLDAVLLQAEMLDLKADPDRTAEGVVIEAQLDRGRGSVATVLIQKGTLHPGDILVAGSEWGRVRALVNDRGEHVKEAGPAMPVEILGLQGTPQAGDRFAVVANEAKAREIAEYRQRLARDKAVARQSGARGSLEQMMNQLQVSGTKEFPLVIKGDVQGSIEAITNALDKLGTDEVRARIVHSGAGGITESDVSLAEASNAAIIGFNVRANKQARNSAEQQGIEIRYYNIIYDLIDDVKAAMSGLLSPERRETFLGNAEILEVFNITKVGKVAGCRVTEGKVERGAGVRLIRDNVVIHEGKLKTLKRFKDEVAEVPSGQECGMAFENYDDIRAGDVIEAFRVEHVSRTL.

Positions 1-10 (MSDKTNDDKT) are enriched in basic and acidic residues. Residues 1 to 374 (MSDKTNDDKT…SQMQETREKI (374 aa)) are disordered. Polar residues predominate over residues 27 to 37 (EQSTVRQNFSH). Composition is skewed to low complexity over residues 63–118 (AAAA…VTKP) and 128–138 (QRPGGQQAQRP). 2 stretches are compositionally biased toward basic and acidic residues: residues 154–225 (SEMD…EAAK) and 232–241 (ARSERRDDAR). Positions 246–284 (GARPQQAGRPQGGRPQPAGRPQQGSPRPAPIIADAAPIA) are enriched in low complexity. Residues 318-333 (PEVRAPKVVKGEDDRR) show a composition bias toward basic and acidic residues. A tr-type G domain is found at 457 to 626 (SRPPVVTIMG…LLQAEMLDLK (170 aa)). The tract at residues 466 to 473 (GHVDHGKT) is G1. 466–473 (GHVDHGKT) contacts GTP. Residues 491–495 (GITQH) are G2. Residues 512–515 (DTPG) form a G3 region. GTP contacts are provided by residues 512–516 (DTPGH) and 566–569 (NKID). Positions 566-569 (NKID) are G4. Residues 602-604 (SAK) are G5.

It belongs to the TRAFAC class translation factor GTPase superfamily. Classic translation factor GTPase family. IF-2 subfamily.

The protein resides in the cytoplasm. Its function is as follows. One of the essential components for the initiation of protein synthesis. Protects formylmethionyl-tRNA from spontaneous hydrolysis and promotes its binding to the 30S ribosomal subunits. Also involved in the hydrolysis of GTP during the formation of the 70S ribosomal complex. This is Translation initiation factor IF-2 from Brucella canis (strain ATCC 23365 / NCTC 10854 / RM-666).